Consider the following 115-residue polypeptide: Large ribosomal subunit protein bL19 (115 aa).

It belongs to the bacterial ribosomal protein bL19 family.

Functionally, this protein is located at the 30S-50S ribosomal subunit interface and may play a role in the structure and function of the aminoacyl-tRNA binding site. The chain is Large ribosomal subunit protein bL19 from Francisella tularensis subsp. tularensis (strain WY96-3418).